The sequence spans 187 residues: Troponin I, slow skeletal muscle (187 aa).

Pro2 carries the post-translational modification N-acetylproline. The tract at residues 2 to 48 (PEVERKPKITASRKLLLKSLMLAKAKECWEQEHEEREAEKVRYLAER) is involved in binding TNC. At Ser58 the chain carries Phosphoserine. An involved in binding TNC and actin region spans residues 97 to 118 (LKLKVMDLRGKFKRPPLRRVRV).

This sequence belongs to the troponin I family. In terms of assembly, binds to actin and tropomyosin. In terms of tissue distribution, highest levels observed in human skeletal muscle (e.g. gastrocnemious muscle), differentiated cultures of primary human muscle cells and rhabdomyosarcoma cells cultured in low serum medium. Expressed in C2 muscle cell myoblasts and myotubes.

Its function is as follows. Troponin I is the inhibitory subunit of troponin, the thin filament regulatory complex which confers calcium-sensitivity to striated muscle actomyosin ATPase activity. The sequence is that of Troponin I, slow skeletal muscle (TNNI1) from Homo sapiens (Human).